The sequence spans 297 residues: 4-hydroxy-tetrahydrodipicolinate synthase (297 aa).

Threonine 47 lines the pyruvate pocket. The active-site Proton donor/acceptor is tyrosine 136. Lysine 165 functions as the Schiff-base intermediate with substrate in the catalytic mechanism. Pyruvate is bound at residue isoleucine 206.

This sequence belongs to the DapA family. In terms of assembly, homotetramer; dimer of dimers.

It localises to the cytoplasm. It carries out the reaction L-aspartate 4-semialdehyde + pyruvate = (2S,4S)-4-hydroxy-2,3,4,5-tetrahydrodipicolinate + H2O + H(+). It participates in amino-acid biosynthesis; L-lysine biosynthesis via DAP pathway; (S)-tetrahydrodipicolinate from L-aspartate: step 3/4. Functionally, catalyzes the condensation of (S)-aspartate-beta-semialdehyde [(S)-ASA] and pyruvate to 4-hydroxy-tetrahydrodipicolinate (HTPA). This chain is 4-hydroxy-tetrahydrodipicolinate synthase, found in Campylobacter curvus (strain 525.92).